A 164-amino-acid chain; its full sequence is Ubiquitin-fold modifier-conjugating enzyme 1 (164 aa).

Cysteine 116 (glycyl thioester intermediate) is an active-site residue.

It belongs to the ubiquitin-conjugating enzyme family. UFC1 subfamily.

In terms of biological role, E2-like enzyme which forms an intermediate with UFM1 via a thioester linkage. The sequence is that of Ubiquitin-fold modifier-conjugating enzyme 1 from Drosophila sechellia (Fruit fly).